A 201-amino-acid polypeptide reads, in one-letter code: Aminoglycoside N(6')-acetyltransferase type 1 (201 aa).

The region spanning 25–192 is the N-acetyltransferase domain; it reads VTLRLMTEHD…PAVYMVQTRQ (168 aa). 2 residues coordinate substrate: Trp51 and Asp154. Asn159 is a binding site for acetyl-CoA.

In terms of assembly, homodimer.

The enzyme catalyses kanamycin B + acetyl-CoA = N(6')-acetylkanamycin B + CoA + H(+). Its function is as follows. Catalyzes the transfer of an acetyl group from acetyl-CoA to the 6'-amino group of aminoglycoside molecules conferring resistance to antibiotics containing the purpurosamine ring including amikacin. The protein is Aminoglycoside N(6')-acetyltransferase type 1 (aacA4) of Klebsiella pneumoniae.